The sequence spans 117 residues: Large ribosomal subunit protein bL20c (117 aa).

It belongs to the bacterial ribosomal protein bL20 family.

Its subcellular location is the plastid. It localises to the chloroplast. Binds directly to 23S ribosomal RNA and is necessary for the in vitro assembly process of the 50S ribosomal subunit. It is not involved in the protein synthesizing functions of that subunit. The sequence is that of Large ribosomal subunit protein bL20c from Calycanthus floridus var. glaucus (Eastern sweetshrub).